Reading from the N-terminus, the 309-residue chain is Olfactory receptor-like protein OLF4 (309 aa).

The Extracellular portion of the chain corresponds to 1-25; it reads MELENDTRIPEFLLLGFSEEPKLQP. Asparagine 5 carries an N-linked (GlcNAc...) asparagine glycan. Residues 26–49 form a helical membrane-spanning segment; the sequence is FLFGLFLSMYLVTILGNLLLILAV. The Cytoplasmic segment spans residues 50–57; sequence SSDSHLHT. A helical membrane pass occupies residues 58-79; that stretch reads PMYFFLANLSFVDICFTCTTIP. The Extracellular segment spans residues 80 to 100; that stretch reads KMLVNIQTQRKVITYESCIIQ. The chain crosses the membrane as a helical span at residues 101–120; it reads MYFFELFAGIDNFLLTVMAY. The Cytoplasmic portion of the chain corresponds to 121 to 139; that stretch reads DRYMAICYPLHYMVIMNPQ. Residues 140–158 form a helical membrane-spanning segment; it reads LCSLLLLVSWIMSALHSLL. The Extracellular portion of the chain corresponds to 159-196; it reads QTLMVLRLSFCTHFQIPHFFCELNQMIQLACSDTFLNN. A helical transmembrane segment spans residues 197 to 219; sequence MMLYFAAILLGVAPLVGVLYSYF. Topologically, residues 220-236 are cytoplasmic; that stretch reads KIVSSIRGISSAHSKYK. The helical transmembrane segment at 237 to 260 threads the bilayer; sequence AFSTCASHLSVVSLFYCTSLGVYL. The Extracellular segment spans residues 261-272; it reads SSAAPQSTHTSS. The helical transmembrane segment at 273 to 292 threads the bilayer; it reads VASVMYTVVTPMLNPFIYSL. Over 293 to 309 the chain is Cytoplasmic; it reads RNKDIKGALNVFFRGKP.

It belongs to the G-protein coupled receptor 1 family.

The protein localises to the cell membrane. Functionally, putative odorant or sperm cell receptor. The protein is Olfactory receptor-like protein OLF4 of Canis lupus familiaris (Dog).